Consider the following 1286-residue polypeptide: DNA-directed RNA polymerase 147 kDa polypeptide (1286 aa).

This sequence belongs to the poxviridae DNA-directed RNA polymerase 147 kDa subunit family. In terms of assembly, the DNA-dependent RNA polymerase used for intermediate and late genes expression consists of eight subunits Rpo30/OPG66, Rpo7/OPG90, Rpo22/OPG103, Rpo147/OPG105, Rpo18/OPG119, Rpo19/OPG131, Rpo132/OPG151 and Rpo35/OPG156. The same holoenzyme, with the addition of the transcription-specificity factor OPG109, is used for early gene expression.

Its subcellular location is the virion. The enzyme catalyses RNA(n) + a ribonucleoside 5'-triphosphate = RNA(n+1) + diphosphate. In terms of biological role, part of the DNA-dependent RNA polymerase which catalyzes the transcription of viral DNA into RNA using the four ribonucleoside triphosphates as substrates. Responsible for the transcription of early, intermediate and late genes. DNA-dependent RNA polymerase associates with the early transcription factor (ETF), itself composed of OPG118 and OPG133, thereby allowing the early genes transcription. Late transcription, and probably also intermediate transcription, require newly synthesized RNA polymerase. This is DNA-directed RNA polymerase 147 kDa polypeptide (OPG105) from Variola virus (isolate Human/India/Ind3/1967) (VARV).